The primary structure comprises 508 residues: UDP-N-acetylmuramoyl-L-alanyl-D-glutamate--L-lysine ligase (508 aa).

Serine 47 contributes to the UDP-N-acetyl-alpha-D-muramoyl-L-alanyl-D-glutamate binding site. Glycine 124 to threonine 130 serves as a coordination point for ATP. UDP-N-acetyl-alpha-D-muramoyl-L-alanyl-D-glutamate is bound by residues threonine 168–threonine 169, serine 195, and arginine 203. Lysine 237 carries the N6-carboxylysine modification. Residues aspartate 425–alanine 428 carry the L-lysine recognition motif motif.

Belongs to the MurCDEF family. MurE subfamily. In terms of processing, carboxylation is probably crucial for Mg(2+) binding and, consequently, for the gamma-phosphate positioning of ATP.

The protein resides in the cytoplasm. The catalysed reaction is UDP-N-acetyl-alpha-D-muramoyl-L-alanyl-D-glutamate + L-lysine + ATP = UDP-N-acetyl-alpha-D-muramoyl-L-alanyl-gamma-D-glutamyl-L-lysine + ADP + phosphate + H(+). The protein operates within cell wall biogenesis; peptidoglycan biosynthesis. Its function is as follows. Catalyzes the addition of L-lysine to the nucleotide precursor UDP-N-acetylmuramoyl-L-alanyl-D-glutamate (UMAG) in the biosynthesis of bacterial cell-wall peptidoglycan. The polypeptide is UDP-N-acetylmuramoyl-L-alanyl-D-glutamate--L-lysine ligase (Enterococcus faecalis (strain ATCC 700802 / V583)).